The sequence spans 336 residues: MYYPLIRKALFQLDPERAHELTFQQLRRVTGTPLEFLIRQSVPTKPVSCMGLSFKNPLGLAAGLDKDGECIDAFGAMGFGFVEVGTVTPRPQSGNDKPRLFRIVEAEGLINRMGFNNQGVDNLVENVKKSHFGGILGINIGKNKDTPVEQGKDDYLICMDKVYPYAGYIAINISSPNTPGLRSLQYGEALDDLLAAIKNKQQELHERHHKYVPVAVKIAPDLSEEELIQIADSLVRHNIDGVIATNTTLDRKLIQGLNYCEQMGGLSGRPLQASSTEVIRRLSLELQGRLPIIGVGGIDSLMAAREKMAAGASLVQIYSGFIFKGPRLIKDIVNYI.

FMN-binding positions include 62–66 (AGLDK) and threonine 86. Lysine 66 is a binding site for substrate. 111-115 (NRMGF) contributes to the substrate binding site. Asparagine 139 and asparagine 172 together coordinate FMN. Asparagine 172 provides a ligand contact to substrate. Residue serine 175 is the Nucleophile of the active site. Asparagine 177 is a binding site for substrate. Residues lysine 217 and threonine 245 each contribute to the FMN site. 246–247 (NT) provides a ligand contact to substrate. Residues glycine 268, glycine 297, and 318-319 (YS) contribute to the FMN site.

It belongs to the dihydroorotate dehydrogenase family. Type 2 subfamily. As to quaternary structure, monomer. It depends on FMN as a cofactor.

It localises to the cell membrane. It catalyses the reaction (S)-dihydroorotate + a quinone = orotate + a quinol. It functions in the pathway pyrimidine metabolism; UMP biosynthesis via de novo pathway; orotate from (S)-dihydroorotate (quinone route): step 1/1. In terms of biological role, catalyzes the conversion of dihydroorotate to orotate with quinone as electron acceptor. This is Dihydroorotate dehydrogenase (quinone) from Serratia proteamaculans (strain 568).